A 100-amino-acid chain; its full sequence is Nucleoid-associated protein HPG27_32 (100 aa).

Belongs to the YbaB/EbfC family. As to quaternary structure, homodimer.

Its subcellular location is the cytoplasm. It localises to the nucleoid. Its function is as follows. Binds to DNA and alters its conformation. May be involved in regulation of gene expression, nucleoid organization and DNA protection. The polypeptide is Nucleoid-associated protein HPG27_32 (Helicobacter pylori (strain G27)).